Consider the following 271-residue polypeptide: Glutamate racemase (271 aa).

Substrate is bound by residues 10-11 (DS) and 42-43 (YG). C73 serves as the catalytic Proton donor/acceptor. 74–75 (NT) provides a ligand contact to substrate. Residue C183 is the Proton donor/acceptor of the active site. 184 to 185 (TH) is a substrate binding site.

It belongs to the aspartate/glutamate racemases family.

The catalysed reaction is L-glutamate = D-glutamate. It participates in cell wall biogenesis; peptidoglycan biosynthesis. In terms of biological role, provides the (R)-glutamate required for cell wall biosynthesis. The polypeptide is Glutamate racemase (Streptococcus thermophilus (strain CNRZ 1066)).